The sequence spans 405 residues: Dihydrolipoyllysine-residue succinyltransferase component of 2-oxoglutarate dehydrogenase complex (405 aa).

The Lipoyl-binding domain occupies 3–78 (SVDILVPDLP…TSRQILGRLR (76 aa)). An N6-lipoyllysine modification is found at lysine 44. The interval 75–111 (GRLREGNSAGKETSAKSEEKASTPAQRQQASLEEQNN) is disordered. Positions 97–111 (TPAQRQQASLEEQNN) are enriched in polar residues. Residues 113-150 (ALSPAIRRLLAEHNLDASAIKGTGVGGRLTREDVEKHL) form the Peripheral subunit-binding (PSBD) domain. At lysine 148 the chain carries N6-acetyllysine. Residues 153–173 (APAKESAPAAAAPAAQPALAA) show a composition bias toward low complexity. Residues 153–178 (APAKESAPAAAAPAAQPALAARSEKR) form a disordered region. Residues histidine 376 and aspartate 380 contribute to the active site.

The protein belongs to the 2-oxoacid dehydrogenase family. In terms of assembly, forms a 24-polypeptide structural core with octahedral symmetry. Part of the 2-oxoglutarate dehydrogenase (OGDH) complex composed of E1 (2-oxoglutarate dehydrogenase), E2 (dihydrolipoamide succinyltransferase) and E3 (dihydrolipoamide dehydrogenase); the complex contains multiple copies of the three enzymatic components (E1, E2 and E3). Interacts with SucA (via N-terminus), the E1 component of OGDH complex. (R)-lipoate serves as cofactor.

It catalyses the reaction N(6)-[(R)-dihydrolipoyl]-L-lysyl-[protein] + succinyl-CoA = N(6)-[(R)-S(8)-succinyldihydrolipoyl]-L-lysyl-[protein] + CoA. It participates in amino-acid degradation; L-lysine degradation via saccharopine pathway; glutaryl-CoA from L-lysine: step 6/6. In terms of biological role, E2 component of the 2-oxoglutarate dehydrogenase (OGDH) complex which catalyzes the second step in the conversion of 2-oxoglutarate to succinyl-CoA and CO(2). This is Dihydrolipoyllysine-residue succinyltransferase component of 2-oxoglutarate dehydrogenase complex (sucB) from Escherichia coli O157:H7.